The following is a 179-amino-acid chain: UPF0227 protein Shewana3_2292 (179 aa).

It belongs to the UPF0227 family.

The sequence is that of UPF0227 protein Shewana3_2292 from Shewanella sp. (strain ANA-3).